Consider the following 283-residue polypeptide: MEMO1 family protein DKAM_1357 (283 aa).

This sequence belongs to the MEMO1 family.

The protein is MEMO1 family protein DKAM_1357 of Desulfurococcus amylolyticus (strain DSM 18924 / JCM 16383 / VKM B-2413 / 1221n) (Desulfurococcus kamchatkensis).